A 1213-amino-acid polypeptide reads, in one-letter code: DNA-directed RNA polymerase subunit beta' (1213 aa).

Residues Cys60, Cys62, Cys75, and Cys78 each contribute to the Zn(2+) site. Asp450, Asp452, and Asp454 together coordinate Mg(2+). Zn(2+)-binding residues include Cys819, Cys893, Cys900, and Cys903.

It belongs to the RNA polymerase beta' chain family. The RNAP catalytic core consists of 2 alpha, 1 beta, 1 beta' and 1 omega subunit. When a sigma factor is associated with the core the holoenzyme is formed, which can initiate transcription. Mg(2+) is required as a cofactor. Requires Zn(2+) as cofactor.

It carries out the reaction RNA(n) + a ribonucleoside 5'-triphosphate = RNA(n+1) + diphosphate. Functionally, DNA-dependent RNA polymerase catalyzes the transcription of DNA into RNA using the four ribonucleoside triphosphates as substrates. In Streptococcus pyogenes serotype M4 (strain MGAS10750), this protein is DNA-directed RNA polymerase subunit beta'.